The following is a 320-amino-acid chain: 33 kDa chaperonin (320 aa).

The span at 1–17 shows a compositional bias: basic and acidic residues; it reads MTDASGSERLKRTKDIS. The disordered stretch occupies residues 1–27; the sequence is MTDASGSERLKRTKDISESTPPSSLPD. Intrachain disulfides connect C262-C264 and C295-C298.

Belongs to the HSP33 family. Post-translationally, under oxidizing conditions two disulfide bonds are formed involving the reactive cysteines. Under reducing conditions zinc is bound to the reactive cysteines and the protein is inactive.

It localises to the cytoplasm. Its function is as follows. Redox regulated molecular chaperone. Protects both thermally unfolding and oxidatively damaged proteins from irreversible aggregation. Plays an important role in the bacterial defense system toward oxidative stress. This is 33 kDa chaperonin from Synechococcus sp. (strain JA-3-3Ab) (Cyanobacteria bacterium Yellowstone A-Prime).